A 447-amino-acid chain; its full sequence is N-succinylarginine dihydrolase (447 aa).

Substrate-binding positions include 19-28, Asn110, and 137-138; these read AGLSFGNEAS and HR. The active site involves Glu174. Arg212 is a binding site for substrate. His248 is an active-site residue. Substrate-binding residues include Asp250 and Asn359. Cys365 acts as the Nucleophile in catalysis.

Belongs to the succinylarginine dihydrolase family. In terms of assembly, homodimer.

It catalyses the reaction N(2)-succinyl-L-arginine + 2 H2O + 2 H(+) = N(2)-succinyl-L-ornithine + 2 NH4(+) + CO2. It functions in the pathway amino-acid degradation; L-arginine degradation via AST pathway; L-glutamate and succinate from L-arginine: step 2/5. Functionally, catalyzes the hydrolysis of N(2)-succinylarginine into N(2)-succinylornithine, ammonia and CO(2). The polypeptide is N-succinylarginine dihydrolase (Escherichia coli O7:K1 (strain IAI39 / ExPEC)).